Here is a 271-residue protein sequence, read N- to C-terminus: Aquaporin-11 (271 aa).

At 1-14 (MSPLLGLRSELQDT) the chain is on the cytoplasmic side. The chain crosses the membrane as a helical span at residues 15-35 (CTSLGLMLSVVLLMGLARVVA). The Lumenal portion of the chain corresponds to 36–41 (RQQLHR). Residues 42-62 (PVAHAFVLEFLATFQLCCCTH) traverse the membrane as a helical segment. The Cytoplasmic portion of the chain corresponds to 63–74 (ELQLLSEQHPAH). The chain crosses the membrane as a helical span at residues 75–95 (PTWTLTLVYFFSLVHGLTLVG). Residues 96 to 163 (TSSNPCGVMM…ACKNPIRVDL (68 aa)) lie on the Lumenal side of the membrane. The NPC motif lies at 99–101 (NPC). The chain crosses the membrane as a helical span at residues 164 to 184 (LKAVITEAVCSFLFHSALLHF). The Cytoplasmic portion of the chain corresponds to 185–194 (QEVRTKLRIH). The chain crosses the membrane as a helical span at residues 195-215 (LLAALITFLVYAGGSLTGAVF). Residues 216–218 (NPA) carry the NPA motif. The Lumenal segment spans residues 216–234 (NPALALSLHFMCFDEAFPQ). A helical transmembrane segment spans residues 235-255 (FFIVYWLAPSLGILLMILMFS). Residues 256 to 271 (FFLPWLHNNHTINKKE) lie on the Cytoplasmic side of the membrane.

The protein belongs to the MIP/aquaporin (TC 1.A.8) family. AQP11/AQP12 subfamily. Homodimer; disulfide-linked. Homotetramer. Can also form homomultimer. Post-translationally, not glycosylated. Detected in the sperm head and tail (at protein level). Expressed in subcutaneous adipocytes. Expressed in testis, kidney and ejaculated spermatozoa.

The protein resides in the endoplasmic reticulum membrane. Its subcellular location is the cytoplasmic vesicle membrane. The protein localises to the cell membrane. It carries out the reaction H2O(in) = H2O(out). It catalyses the reaction glycerol(in) = glycerol(out). The catalysed reaction is H2O2(out) = H2O2(in). In terms of biological role, channel protein that facilitates the transport of water, glycerol and hydrogen peroxide across membrane of cell or organelles guaranteeing intracellular homeostasis in several organes like liver, kidney and brain. In situation of stress, participates in endoplasmic reticulum (ER) homeostasis by regulating redox homeostasis through the transport of hydrogen peroxide across the endoplasmic reticulum membrane thereby regulating the oxidative stress through the NADPH oxidase 2 pathway. Plays a role by maintaining an environment suitable for translation or protein foldings in the ER lumen namely by participating in the PKD1 glycosylation processing resulting in regulation of PKD1 membrane trafficking thereby preventing the accumulation of unfolding protein in ER. Plays a role in the proximal tubule function by regulating its endosomal acidification. May play a role in postnatal kidney development. In Homo sapiens (Human), this protein is Aquaporin-11.